The primary structure comprises 382 residues: Fimbrial usher domain-containing protein YdeT (382 aa).

This Escherichia coli O157:H7 protein is Fimbrial usher domain-containing protein YdeT (ydeT).